A 337-amino-acid chain; its full sequence is CMP-N-acetylneuraminate-beta-galactosamide-alpha-2,3-sialyltransferase 1 (337 aa).

Residues 1–4 (MRRK) lie on the Cytoplasmic side of the membrane. The chain crosses the membrane as a helical; Signal-anchor for type II membrane protein span at residues 5-25 (TLKYLTFFLLFIFLTSFVLNY). Residues 26-337 (SNTGVPSAWF…INKIRIFKGR (312 aa)) lie on the Lumenal side of the membrane. Cystine bridges form between C56/C61, C58/C136, and C139/C278. A glycan (N-linked (GlcNAc...) asparagine) is linked at N76. Substrate is bound at residue Q102. Residue N109 is glycosylated (N-linked (GlcNAc...) asparagine). 8 residues coordinate substrate: N144, N167, Y227, Y263, G267, G287, H296, and H313. N320 carries an N-linked (GlcNAc...) asparagine glycan.

It belongs to the glycosyltransferase 29 family. The soluble form derives from the membrane form by proteolytic processing. Highly expressed in submaxillary gland and to a much lesser extent in liver, lung, kidney, heart and brain.

It is found in the golgi apparatus. Its subcellular location is the golgi stack membrane. It localises to the trans-Golgi network membrane. The protein localises to the secreted. It catalyses the reaction a beta-D-galactosyl-(1-&gt;3)-N-acetyl-alpha-D-galactosaminyl derivative + CMP-N-acetyl-beta-neuraminate = an N-acetyl-alpha-neuraminyl-(2-&gt;3)-beta-D-galactosyl-(1-&gt;3)-N-acetyl-alpha-D-galactosaminyl derivative + CMP + H(+). The enzyme catalyses a ganglioside GM1 (d18:1(4E)) + CMP-N-acetyl-beta-neuraminate = a ganglioside GD1a (d18:1(4E)) + CMP + H(+). It carries out the reaction ganglioside GM1 (d18:1(4E)/18:0) + CMP-N-acetyl-beta-neuraminate = ganglioside GD1a (18:1(4E)/18:0) + CMP + H(+). The catalysed reaction is a ganglioside GA1 + CMP-N-acetyl-beta-neuraminate = a ganglioside GM1b + CMP + H(+). It catalyses the reaction a ganglioside GA1 (d18:1(4E)) + CMP-N-acetyl-beta-neuraminate = a ganglioside GM1b (d18:1(4E)) + CMP + H(+). The enzyme catalyses a ganglioside GD1b + CMP-N-acetyl-beta-neuraminate = a ganglioside GT1b + CMP + H(+). It carries out the reaction a 3-O-[beta-D-galactosyl-(1-&gt;3)-N-acetyl-alpha-D-galactosaminyl]-L-threonyl-[protein] + CMP-N-acetyl-beta-neuraminate = a 3-O-[N-acetyl-alpha-neuraminyl-(2-&gt;3)-beta-D-galactosyl-(1-&gt;3)-N-acetyl-alpha-D-galactosaminyl]-L-threonyl-[protein] + CMP + H(+). The catalysed reaction is a 3-O-[beta-D-galactosyl-(1-&gt;3)-N-acetyl-alpha-D-galactosaminyl]-L-seryl-[protein] + CMP-N-acetyl-beta-neuraminate = 3-O-[N-acetyl-alpha-neuraminyl-(2-&gt;3)-beta-D-galactosyl-(1-&gt;3)-N-acetyl-alpha-D-galactosaminyl]-L-seryl-[protein] + CMP + H(+). Its pathway is protein modification; protein glycosylation. It functions in the pathway glycolipid biosynthesis. Functionally, a beta-galactoside alpha2-&gt;3 sialyltransferase involved in terminal sialylation of glycoproteins and glycolipids. Catalyzes the transfer of sialic acid (N-acetyl-neuraminic acid; Neu5Ac) from the nucleotide sugar donor CMP-Neu5Ac onto acceptor Galbeta-(1-&gt;3)-GalNAc-terminated glycoconjugates through an alpha2-3 linkage. Adds sialic acid to the core 1 O-glycan, Galbeta-(1-&gt;3)-GalNAc-O-Ser/Thr, which is a major structure of mucin-type O-glycans. As part of a homeostatic mechanism that regulates CD8-positive T cell numbers, sialylates core 1 O-glycans of T cell glycoproteins, SPN/CD43 and PTPRC/CD45. Prevents premature apoptosis of thymic CD8-positive T cells prior to peripheral emigration, whereas in the secondary lymphoid organs controls the survival of CD8-positive memory T cells generated following a successful immune response. Transfers sialic acid to asialofetuin, presumably onto Galbeta-(1-&gt;3)-GalNAc-O-Ser. Sialylates GM1a, GA1 and GD1b gangliosides to form GD1a, GM1b and GT1b, respectively. In Mus musculus (Mouse), this protein is CMP-N-acetylneuraminate-beta-galactosamide-alpha-2,3-sialyltransferase 1 (St3gal1).